Here is a 486-residue protein sequence, read N- to C-terminus: Cardiolipin synthase A (486 aa).

The next 2 membrane-spanning stretches (helical) occupy residues 3-23 (TFYT…IAGV) and 38-58 (MAWL…YLSF). PLD phosphodiesterase domains lie at 219 to 246 (MDLR…VDPR) and 399 to 426 (KDGL…DMRS). Catalysis depends on residues H224, K226, D231, H404, K406, and D411.

It belongs to the phospholipase D family. Cardiolipin synthase subfamily. ClsA sub-subfamily.

It localises to the cell inner membrane. The catalysed reaction is 2 a 1,2-diacyl-sn-glycero-3-phospho-(1'-sn-glycerol) = a cardiolipin + glycerol. In terms of biological role, catalyzes the reversible phosphatidyl group transfer from one phosphatidylglycerol molecule to another to form cardiolipin (CL) (diphosphatidylglycerol) and glycerol. The chain is Cardiolipin synthase A from Pectobacterium carotovorum subsp. carotovorum (strain PC1).